We begin with the raw amino-acid sequence, 178 residues long: Acireductone dioxygenase (178 aa).

Residues histidine 82, histidine 84, glutamate 88, and histidine 127 each coordinate Fe(2+). Ni(2+)-binding residues include histidine 82, histidine 84, glutamate 88, and histidine 127. A Phosphoserine modification is found at serine 157.

Belongs to the acireductone dioxygenase (ARD) family. It depends on Fe(2+) as a cofactor. Ni(2+) is required as a cofactor.

Its subcellular location is the cytoplasm. It localises to the nucleus. It carries out the reaction 1,2-dihydroxy-5-(methylsulfanyl)pent-1-en-3-one + O2 = 4-methylsulfanyl-2-oxobutanoate + formate + 2 H(+). The catalysed reaction is 1,2-dihydroxy-5-(methylsulfanyl)pent-1-en-3-one + O2 = 3-(methylsulfanyl)propanoate + CO + formate + 2 H(+). Its pathway is amino-acid biosynthesis; L-methionine biosynthesis via salvage pathway; L-methionine from S-methyl-5-thio-alpha-D-ribose 1-phosphate: step 5/6. In terms of biological role, catalyzes 2 different reactions between oxygen and the acireductone 1,2-dihydroxy-3-keto-5-methylthiopentene (DHK-MTPene) depending upon the metal bound in the active site. Fe-containing acireductone dioxygenase (Fe-ARD) produces formate and 2-keto-4-methylthiobutyrate (KMTB), the alpha-ketoacid precursor of methionine in the methionine recycle pathway. Ni-containing acireductone dioxygenase (Ni-ARD) produces methylthiopropionate, carbon monoxide and formate, and does not lie on the methionine recycle pathway. This Schizosaccharomyces pombe (strain 972 / ATCC 24843) (Fission yeast) protein is Acireductone dioxygenase (adi1).